Consider the following 98-residue polypeptide: Serine rich endogenous peptide 10 (98 aa).

The signal sequence occupies residues 1 to 29 (MERKKFSSKFIHLLIVFLLLCTFLSRTES). Positions 50–98 (NSAIGTPSSTSDHAPGSNGRKLMSIYRPNGDIFTGPSGSGHGGGRTPAP) are disordered. Over residues 52–61 (AIGTPSSTSD) the composition is skewed to polar residues. 2 short sequence motifs (SCOOP motif) span residues 52–66 (AIGT…APGS) and 80–94 (DIFT…GGGR). 2 short sequence motifs (sxS motif essential for MIK2 binding) span residues 58–60 (STS) and 86–88 (SGS). A compositionally biased stretch (gly residues) spans 86-98 (SGSGHGGGRTPAP).

It belongs to the serine rich endogenous peptide (SCOOP) phytocytokine family. In terms of assembly, interacts with MIK2 (via extracellular leucine-rich repeat domain); this interaction triggers the formation of complex between MIK2 and the BAK1/SERK3 and SERK4 coreceptors, and subsequent BAK1 activation by phosphorylation. Mostly expressed in leaves and seedlings shoots, to a lower extent, in roots, but barely in flowers.

It localises to the cell membrane. It is found in the secreted. Its subcellular location is the extracellular space. The protein resides in the apoplast. Brassicaceae-specific phytocytokine (plant endogenous peptide released into the apoplast) perceived by MIK2 in a BAK1/SERK3 and SERK4 coreceptors-dependent manner, that modulates various physiological and antimicrobial processes including growth prevention and reactive oxygen species (ROS) response regulation. Inhibits root growth and regulates root meristems. Promotes ROS production and MAPK (e.g. MPK3, MPK4 and MPK6) activation in a MIK2-dependent manner, thus leading to the up-regulation of immune-related marker genes (e.g. WRKY30, WRKY33 and CYP81F2). The protein is Serine rich endogenous peptide 10 of Arabidopsis thaliana (Mouse-ear cress).